Reading from the N-terminus, the 106-residue chain is Large ribosomal subunit protein eL42 (106 aa).

It belongs to the eukaryotic ribosomal protein eL42 family.

The chain is Large ribosomal subunit protein eL42 (RPL44) from Wickerhamomyces ciferrii (strain ATCC 14091 / BCRC 22168 / CBS 111 / JCM 3599 / NBRC 0793 / NRRL Y-1031 F-60-10) (Yeast).